The following is a 323-amino-acid chain: Acetyl esterase (323 aa).

Residues 91-93 (HGG) carry the Involved in the stabilization of the negatively charged intermediate by the formation of the oxyanion hole motif. Catalysis depends on residues serine 165, aspartate 262, and histidine 292.

It belongs to the 'GDXG' lipolytic enzyme family. As to quaternary structure, homodimer. Interacts with MalT and MelA.

The protein localises to the cytoplasm. Functionally, displays esterase activity towards short chain fatty esters (acyl chain length of up to 8 carbons). Able to hydrolyze triacetylglycerol (triacetin) and tributyrylglycerol (tributyrin), but not trioleylglycerol (triolein) or cholesterol oleate. Negatively regulates MalT activity by antagonizing maltotriose binding. Inhibits MelA galactosidase activity. The sequence is that of Acetyl esterase from Salmonella dublin (strain CT_02021853).